A 129-amino-acid chain; its full sequence is Ribosome-binding factor A (129 aa).

It belongs to the RbfA family. Monomer. Binds 30S ribosomal subunits, but not 50S ribosomal subunits or 70S ribosomes.

The protein localises to the cytoplasm. Functionally, one of several proteins that assist in the late maturation steps of the functional core of the 30S ribosomal subunit. Associates with free 30S ribosomal subunits (but not with 30S subunits that are part of 70S ribosomes or polysomes). Required for efficient processing of 16S rRNA. May interact with the 5'-terminal helix region of 16S rRNA. This is Ribosome-binding factor A from Thioalkalivibrio sulfidiphilus (strain HL-EbGR7).